A 252-amino-acid chain; its full sequence is Imidazole glycerol phosphate synthase subunit HisF (252 aa).

Residues Asp11 and Asp130 contribute to the active site.

This sequence belongs to the HisA/HisF family. In terms of assembly, heterodimer of HisH and HisF.

The protein localises to the cytoplasm. It carries out the reaction 5-[(5-phospho-1-deoxy-D-ribulos-1-ylimino)methylamino]-1-(5-phospho-beta-D-ribosyl)imidazole-4-carboxamide + L-glutamine = D-erythro-1-(imidazol-4-yl)glycerol 3-phosphate + 5-amino-1-(5-phospho-beta-D-ribosyl)imidazole-4-carboxamide + L-glutamate + H(+). It functions in the pathway amino-acid biosynthesis; L-histidine biosynthesis; L-histidine from 5-phospho-alpha-D-ribose 1-diphosphate: step 5/9. Functionally, IGPS catalyzes the conversion of PRFAR and glutamine to IGP, AICAR and glutamate. The HisF subunit catalyzes the cyclization activity that produces IGP and AICAR from PRFAR using the ammonia provided by the HisH subunit. The chain is Imidazole glycerol phosphate synthase subunit HisF from Desulforudis audaxviator (strain MP104C).